Reading from the N-terminus, the 795-residue chain is Phenylalanine--tRNA ligase beta subunit (795 aa).

One can recognise a tRNA-binding domain in the interval 39–148 (AGSFNGVVVG…ADAPLGTDIR (110 aa)). One can recognise a B5 domain in the interval 401-476 (PKRATITLRR…RVYGYNNIPD (76 aa)). Mg(2+)-binding residues include aspartate 454, aspartate 460, glutamate 463, and glutamate 464. Residues 701 to 794 (SRFPANRRDI…LKERFQASLR (94 aa)) form the FDX-ACB domain.

This sequence belongs to the phenylalanyl-tRNA synthetase beta subunit family. Type 1 subfamily. Tetramer of two alpha and two beta subunits. Mg(2+) serves as cofactor.

Its subcellular location is the cytoplasm. The catalysed reaction is tRNA(Phe) + L-phenylalanine + ATP = L-phenylalanyl-tRNA(Phe) + AMP + diphosphate + H(+). The polypeptide is Phenylalanine--tRNA ligase beta subunit (Salmonella paratyphi A (strain ATCC 9150 / SARB42)).